Here is a 360-residue protein sequence, read N- to C-terminus: Protein Wnt-2 (360 aa).

The first 25 residues, 1 to 25, serve as a signal peptide directing secretion; sequence MNVPLGGIWLWLPLLLTWLTPEVSS. Intrachain disulfides connect C76/C87, C127/C135, C137/C157, C206/C220, C208/C215, C278/C309, C294/C304, C308/C348, C324/C339, C326/C336, and C331/C332. Residue S212 is the site of O-palmitoleoyl serine; by PORCN attachment. N295 is a glycosylation site (N-linked (GlcNAc...) asparagine).

It belongs to the Wnt family. Post-translationally, palmitoleoylation is required for efficient binding to frizzled receptors. Depalmitoleoylation leads to Wnt signaling pathway inhibition. As to expression, in embryos in the developing allantois, pericardium heart, and ventral-lateral mesoderm; in adults in lung, brain, heart and placenta.

Its subcellular location is the secreted. It localises to the extracellular space. The protein resides in the extracellular matrix. Ligand for members of the frizzled family of seven transmembrane receptors. Functions in the canonical Wnt/beta-catenin signaling pathway. Functions as a upstream regulator of FGF10 expression. Plays an important role in embryonic lung development. May contribute to embryonic brain development by regulating the proliferation of dopaminergic precursors and neurons. This Mus musculus (Mouse) protein is Protein Wnt-2 (Wnt2).